The chain runs to 724 residues: Methionine--tRNA ligase (724 aa).

The 'HIGH' region signature appears at 11-21 (PYANGPIHAGH). Residues cysteine 143, cysteine 146, cysteine 156, and cysteine 159 each coordinate Zn(2+). Residues 344-348 (KFSTS) carry the 'KMSKS' region motif. Threonine 347 lines the ATP pocket. In terms of domain architecture, tRNA-binding spans 624–724 (EFSKIDLRIG…KEVKLGAKVR (101 aa)).

Belongs to the class-I aminoacyl-tRNA synthetase family. MetG type 1 subfamily. Homodimer. Zn(2+) is required as a cofactor.

The protein resides in the cytoplasm. It carries out the reaction tRNA(Met) + L-methionine + ATP = L-methionyl-tRNA(Met) + AMP + diphosphate. Is required not only for elongation of protein synthesis but also for the initiation of all mRNA translation through initiator tRNA(fMet) aminoacylation. The protein is Methionine--tRNA ligase of Pyrococcus furiosus (strain ATCC 43587 / DSM 3638 / JCM 8422 / Vc1).